Here is a 156-residue protein sequence, read N- to C-terminus: MKLQLIAVGTRMPDWVTTGFQEYQRRFPRDMALELVEIPAGKRGKNADIARILHKEGEQMLAAIPKSNHIVSLDLPGKTWTTPDLATQLGKWQLDGRDVSLLIGGPEGLAPACKQAASQSWCLSALTLPHPLVRVVVAESLYRAWSVNNNHPYHRE.

Residues leucine 73, glycine 104, and 123 to 128 contribute to the S-adenosyl-L-methionine site; that span reads LSALTL.

The protein belongs to the RNA methyltransferase RlmH family. Homodimer.

The protein localises to the cytoplasm. It carries out the reaction pseudouridine(1915) in 23S rRNA + S-adenosyl-L-methionine = N(3)-methylpseudouridine(1915) in 23S rRNA + S-adenosyl-L-homocysteine + H(+). Specifically methylates the pseudouridine at position 1915 (m3Psi1915) in 23S rRNA. This chain is Ribosomal RNA large subunit methyltransferase H, found in Shewanella sediminis (strain HAW-EB3).